The sequence spans 169 residues: Disulfide bond formation protein B (169 aa).

Over 1–8 the chain is Cytoplasmic; the sequence is MRLSVRWV. Residues 9-25 traverse the membrane as a helical segment; that stretch reads FFLGFFLCALMLAIAGY. Residues 26 to 43 are Periplasmic-facing; sequence FQFVENLEPCPLCILSRV. Cysteine 35 and cysteine 38 form a disulfide bridge. A helical transmembrane segment spans residues 44–60; the sequence is AVLAIGGVFLVAALHNP. The Cytoplasmic portion of the chain corresponds to 61–67; that stretch reads KSWGIKV. The helical transmembrane segment at 68-84 threads the bilayer; sequence YALLGFVVTLIGIGITG. Topologically, residues 85–141 are periplasmic; that stretch reads RHVWLQSLPADQVPACGPGLNFMLDNFPLTETLELVFRGSGECAEVQWSFLGLTIPG. An intrachain disulfide couples cysteine 100 to cysteine 127. Residues 142–160 traverse the membrane as a helical segment; sequence WTLVAFLFLGVISLWQMGR. Residues 161-169 are Cytoplasmic-facing; sequence TGGGAGKLT.

Belongs to the DsbB family.

The protein localises to the cell inner membrane. In terms of biological role, required for disulfide bond formation in some periplasmic proteins. Acts by oxidizing the DsbA protein. This Nitrosococcus oceani (strain ATCC 19707 / BCRC 17464 / JCM 30415 / NCIMB 11848 / C-107) protein is Disulfide bond formation protein B.